A 320-amino-acid chain; its full sequence is tRNA-cytidine(32) 2-sulfurtransferase (320 aa).

Residues 54–59 (SGGKDS) carry the PP-loop motif motif. [4Fe-4S] cluster-binding residues include cysteine 129, cysteine 132, and cysteine 220.

This sequence belongs to the TtcA family. As to quaternary structure, homodimer. Mg(2+) serves as cofactor. [4Fe-4S] cluster is required as a cofactor.

It localises to the cytoplasm. The enzyme catalyses cytidine(32) in tRNA + S-sulfanyl-L-cysteinyl-[cysteine desulfurase] + AH2 + ATP = 2-thiocytidine(32) in tRNA + L-cysteinyl-[cysteine desulfurase] + A + AMP + diphosphate + H(+). The protein operates within tRNA modification. Functionally, catalyzes the ATP-dependent 2-thiolation of cytidine in position 32 of tRNA, to form 2-thiocytidine (s(2)C32). The sulfur atoms are provided by the cysteine/cysteine desulfurase (IscS) system. The protein is tRNA-cytidine(32) 2-sulfurtransferase of Bordetella parapertussis (strain 12822 / ATCC BAA-587 / NCTC 13253).